A 352-amino-acid polypeptide reads, in one-letter code: Tubby-like F-box protein 10 (352 aa).

Positions 1–11 (MAAVREPREEA) are enriched in basic and acidic residues. Residues 1-23 (MAAVREPREEAAVGEGEGEEEGR) are disordered. One can recognise an F-box domain in the interval 22-78 (GRWGGLLPELVEEVVRRVEASGGERWPARKDLVSCACVCRRWREAAAAVVRPLPESG).

The protein belongs to the TUB family. Ubiquitous.

This Oryza sativa subsp. japonica (Rice) protein is Tubby-like F-box protein 10 (TULP10).